Reading from the N-terminus, the 197-residue chain is Carbohydrate-binding X8 domain-containing protein (197 aa).

The first 19 residues, 1–19 (MAVLLPLFLLSFMFTYSNA), serve as a signal peptide directing secretion. Low complexity predominate over residues 101–113 (SCLSSSSSNGTPT). A disordered region spans residues 101–176 (SCLSSSSSNG…TSGDPNGGEE (76 aa)). Over residues 116–125 (YPSTGNSTTA) the composition is skewed to polar residues. A compositionally biased stretch (low complexity) spans 126 to 145 (SPGTTNPSTGNSTNSTLPTN). Positions 146–155 (DKPTSSTITF) are enriched in polar residues. Over residues 156-170 (PDSTTMGPSSSTSGD) the composition is skewed to low complexity. Asn-172 carries the GPI-anchor amidated asparagine lipid modification. Positions 173–197 (GGEELSVRTTTIILLTTIAAVALRV) are cleaved as a propeptide — removed in mature form.

In terms of tissue distribution, expressed in the sieve elements.

Its subcellular location is the cell membrane. The sequence is that of Carbohydrate-binding X8 domain-containing protein from Arabidopsis thaliana (Mouse-ear cress).